Reading from the N-terminus, the 392-residue chain is Chorismate synthase (392 aa).

Positions 39 and 45 each coordinate NADP(+). FMN contacts are provided by residues arginine 131–serine 133, asparagine 255–alanine 256, glycine 300, lysine 315–threonine 319, and arginine 341.

It belongs to the chorismate synthase family. In terms of assembly, homotetramer. It depends on FMNH2 as a cofactor.

The enzyme catalyses 5-O-(1-carboxyvinyl)-3-phosphoshikimate = chorismate + phosphate. It participates in metabolic intermediate biosynthesis; chorismate biosynthesis; chorismate from D-erythrose 4-phosphate and phosphoenolpyruvate: step 7/7. Functionally, catalyzes the anti-1,4-elimination of the C-3 phosphate and the C-6 proR hydrogen from 5-enolpyruvylshikimate-3-phosphate (EPSP) to yield chorismate, which is the branch point compound that serves as the starting substrate for the three terminal pathways of aromatic amino acid biosynthesis. This reaction introduces a second double bond into the aromatic ring system. This Leuconostoc citreum (strain KM20) protein is Chorismate synthase.